The following is a 115-amino-acid chain: Transcription and mRNA export factor ENY2 (115 aa).

This sequence belongs to the ENY2 family. Component of a deubiquitination module (DUB module) formed by ENY2, SGF11, and UBP22 in Arabidopsis. Interacts directly with SGF11, but not with UBP22. Interacts with MOS4. Expressed in roots, cotyledons, leaves and upper part of sepals.

It is found in the nucleus. It localises to the nucleoplasm. Functionally, component of a deubiquitination module (DUB module) that specifically deubiquinates monoubiquinated histone H2B (H2Bub). Does not seem to be a component of the TREX-2 complex. Seems to act independently of the SAGA multiprotein complex. The DUB module is responsible for the major H2Bub deubiquitinase activity in Arabidopsis. The protein is Transcription and mRNA export factor ENY2 of Arabidopsis thaliana (Mouse-ear cress).